The chain runs to 571 residues: MRTSQYLLATQKETPADAVVISHQLMLRAGMIRKLASGLYTWLPMGLRVMRKVEAVVREEMNAAGALEVLMPSIQPAELWQESGRWEQYGPELLRLKDRHQRDFCVGPTHEEVITDLARNELSSYKQLPLNLYQIQTKFRDEIRPRFGLMRGREFIMKDAYSFHADQASLQETYDRMHQAYSNVFTRLGLDFRPVQADTGSIGGSYSHEFHVLAESGEDDVIFSDSSDYAANIEKAEAIPRETVRPAPTEELRLVDTPNAKTIAQLVENHGLPIEKTVKTLIVRGAEEGKLIALIVRGDHELNEIKATKLEQVADPLVMATEAELRDAIGAGAGSLGPLNLPLEIIIDRSVALMSDFGIGANIDDKHYFGVNWERDLPVPQVADLRNVVEGDPSPDGQGTLVIKRGIEVGHIFQLGTKYSEALKCQVLGENGKPVVLSMGCYGIGVSRVVAAAIEQSYDDKGIIWNDALAPFQIALVPLRYETEVVREATDKLYAELTAAGFEVLLDDRDKKTSPGIKFADMELIGIPHRIVVSDRGLAEGNLEYKHRTEQDAQALPLNEVLTFLQARVRR.

The protein belongs to the class-II aminoacyl-tRNA synthetase family. ProS type 1 subfamily. In terms of assembly, homodimer.

It localises to the cytoplasm. It catalyses the reaction tRNA(Pro) + L-proline + ATP = L-prolyl-tRNA(Pro) + AMP + diphosphate. Functionally, catalyzes the attachment of proline to tRNA(Pro) in a two-step reaction: proline is first activated by ATP to form Pro-AMP and then transferred to the acceptor end of tRNA(Pro). As ProRS can inadvertently accommodate and process non-cognate amino acids such as alanine and cysteine, to avoid such errors it has two additional distinct editing activities against alanine. One activity is designated as 'pretransfer' editing and involves the tRNA(Pro)-independent hydrolysis of activated Ala-AMP. The other activity is designated 'posttransfer' editing and involves deacylation of mischarged Ala-tRNA(Pro). The misacylated Cys-tRNA(Pro) is not edited by ProRS. The polypeptide is Proline--tRNA ligase (Pseudomonas putida (strain ATCC 700007 / DSM 6899 / JCM 31910 / BCRC 17059 / LMG 24140 / F1)).